Here is a 142-residue protein sequence, read N- to C-terminus: Putative pterin-4-alpha-carbinolamine dehydratase (142 aa).

This sequence belongs to the pterin-4-alpha-carbinolamine dehydratase family.

It carries out the reaction (4aS,6R)-4a-hydroxy-L-erythro-5,6,7,8-tetrahydrobiopterin = (6R)-L-erythro-6,7-dihydrobiopterin + H2O. The polypeptide is Putative pterin-4-alpha-carbinolamine dehydratase (pcbd-1) (Caenorhabditis elegans).